The chain runs to 577 residues: Aspartate--tRNA(Asp/Asn) ligase (577 aa).

L-aspartate is bound at residue Glu171. The tract at residues 195–198 is aspartate; sequence QLFK. Arg217 is a binding site for L-aspartate. Residues 217 to 219 and Gln226 each bind ATP; that span reads RDE. His444 provides a ligand contact to L-aspartate. Glu474 is a binding site for ATP. An L-aspartate-binding site is contributed by Arg481. 526–529 provides a ligand contact to ATP; the sequence is GFDR.

The protein belongs to the class-II aminoacyl-tRNA synthetase family. Type 1 subfamily. Homodimer.

It localises to the cytoplasm. The enzyme catalyses tRNA(Asx) + L-aspartate + ATP = L-aspartyl-tRNA(Asx) + AMP + diphosphate. Functionally, aspartyl-tRNA synthetase with relaxed tRNA specificity since it is able to aspartylate not only its cognate tRNA(Asp) but also tRNA(Asn). Reaction proceeds in two steps: L-aspartate is first activated by ATP to form Asp-AMP and then transferred to the acceptor end of tRNA(Asp/Asn). In Helicobacter pylori (strain P12), this protein is Aspartate--tRNA(Asp/Asn) ligase.